The sequence spans 450 residues: Probable ECA polymerase (450 aa).

Helical transmembrane passes span 6-26 (FSGL…LTWF), 37-57 (VFFS…TSVL), 63-83 (VGVA…CFYA), 118-138 (VILM…NGFL), 155-175 (GVAL…VYFL), 181-201 (AWLF…MIVG), 207-227 (IIIA…ISLW), 228-248 (MLAA…LKRY), 341-361 (LVVM…GLII), 378-398 (YKAA…IVLA), and 410-430 (VFFI…YWLF).

The protein belongs to the WzyE family. As to quaternary structure, probably part of a complex composed of WzxE, WzyE and WzzE.

The protein resides in the cell inner membrane. Its pathway is bacterial outer membrane biogenesis; enterobacterial common antigen biosynthesis. Probably involved in the polymerization of enterobacterial common antigen (ECA) trisaccharide repeat units. In Escherichia coli O7:K1 (strain IAI39 / ExPEC), this protein is Probable ECA polymerase.